A 268-amino-acid chain; its full sequence is Shikimate dehydrogenase (NADP(+)) (268 aa).

Shikimate is bound by residues 15 to 17 (SKS) and T60. K64 (proton acceptor) is an active-site residue. Residues N85 and D101 each coordinate shikimate. NADP(+) is bound by residues 121–125 (GAGGS) and L208. Y210 serves as a coordination point for shikimate. Residue G230 participates in NADP(+) binding.

It belongs to the shikimate dehydrogenase family. Homodimer.

It carries out the reaction shikimate + NADP(+) = 3-dehydroshikimate + NADPH + H(+). It functions in the pathway metabolic intermediate biosynthesis; chorismate biosynthesis; chorismate from D-erythrose 4-phosphate and phosphoenolpyruvate: step 4/7. Its function is as follows. Involved in the biosynthesis of the chorismate, which leads to the biosynthesis of aromatic amino acids. Catalyzes the reversible NADPH linked reduction of 3-dehydroshikimate (DHSA) to yield shikimate (SA). The protein is Shikimate dehydrogenase (NADP(+)) of Helicobacter hepaticus (strain ATCC 51449 / 3B1).